The following is a 92-amino-acid chain: Bombyxin A-6 (92 aa).

Positions 1 to 19 (MKILLAIALMLSTVMWVST) are cleaved as a signal peptide. Position 20 is a pyrrolidone carboxylic acid (glutamine 20). Cystine bridges form between cysteine 29/cysteine 79, cysteine 41/cysteine 92, and cysteine 78/cysteine 83. Residues 50–70 (SGAQFASYGSAWLMPYSEGRG) constitute a propeptide, c peptide like.

It belongs to the insulin family. Heterodimer of a B chain and an A chain linked by two disulfide bonds.

The protein localises to the secreted. Functionally, brain peptide responsible for activation of prothoracic glands to produce ecdysone in insects. The sequence is that of Bombyxin A-6 (BBXA6) from Bombyx mori (Silk moth).